The sequence spans 209 residues: ATP-dependent Clp protease proteolytic subunit (209 aa).

Ser107 functions as the Nucleophile in the catalytic mechanism. Residue His132 is part of the active site.

The protein belongs to the peptidase S14 family. Fourteen ClpP subunits assemble into 2 heptameric rings which stack back to back to give a disk-like structure with a central cavity, resembling the structure of eukaryotic proteasomes.

It is found in the cytoplasm. The catalysed reaction is Hydrolysis of proteins to small peptides in the presence of ATP and magnesium. alpha-casein is the usual test substrate. In the absence of ATP, only oligopeptides shorter than five residues are hydrolyzed (such as succinyl-Leu-Tyr-|-NHMec, and Leu-Tyr-Leu-|-Tyr-Trp, in which cleavage of the -Tyr-|-Leu- and -Tyr-|-Trp bonds also occurs).. Its function is as follows. Cleaves peptides in various proteins in a process that requires ATP hydrolysis. Has a chymotrypsin-like activity. Plays a major role in the degradation of misfolded proteins. In Ruegeria pomeroyi (strain ATCC 700808 / DSM 15171 / DSS-3) (Silicibacter pomeroyi), this protein is ATP-dependent Clp protease proteolytic subunit.